The sequence spans 1122 residues: AP-4 complex subunit epsilon-1 (1122 aa).

Serine 699 carries the post-translational modification Phosphoserine. Composition is skewed to basic and acidic residues over residues tyrosine 714–alanine 728 and threonine 745–glutamate 760. Disordered stretches follow at residues tyrosine 714–glutamate 760 and serine 797–leucine 861. Positions proline 726 to serine 1122 are interaction with TEPSIN. Residues glutamate 841 to serine 853 are compositionally biased toward low complexity. Position 851 is a phosphoserine (serine 851).

It belongs to the adaptor complexes large subunit family. As to quaternary structure, adaptor protein complex 4 (AP-4) is a heterotetramer composed of two large adaptins (epsilon-type subunit AP4E1 and beta-type subunit AP4B1), a medium adaptin (mu-type subunit AP4M1) and a small adaptin (sigma-type AP4S1). Interacts with TEPSIN. Interacts with GRIA2; probably indirect it mediates the somatodendritic localization of GRIA2 in neurons.

It is found in the golgi apparatus. It localises to the trans-Golgi network membrane. In terms of biological role, component of the adaptor protein complex 4 (AP-4). Adaptor protein complexes are vesicle coat components involved both in vesicle formation and cargo selection. They control the vesicular transport of proteins in different trafficking pathways. AP-4 forms a non clathrin-associated coat on vesicles departing the trans-Golgi network (TGN) and may be involved in the targeting of proteins from the trans-Golgi network (TGN) to the endosomal-lysosomal system. It is also involved in protein sorting to the basolateral membrane in epithelial cells and the proper asymmetric localization of somatodendritic proteins in neurons. AP-4 is involved in the recognition and binding of tyrosine-based sorting signals found in the cytoplasmic part of cargos, but may also recognize other types of sorting signal. The sequence is that of AP-4 complex subunit epsilon-1 from Mus musculus (Mouse).